A 452-amino-acid polypeptide reads, in one-letter code: Caspase-2 (452 aa).

Alanine 2 bears the N-acetylalanine mark. Positions 2–169 (AAPSAGSWST…TVEHSLDNKD (168 aa)) are excised as a propeptide. The region spanning 32 to 121 (MHPHHQETLK…GHLEDMLLTT (90 aa)) is the CARD domain. Position 157 is a phosphoserine (serine 157). Residues histidine 277 and cysteine 320 contribute to the active site. Residues 326-333 (DRGVDQQD) constitute a propeptide that is removed on maturation. Basic and acidic residues predominate over residues 327–336 (RGVDQQDGKN). The tract at residues 327 to 354 (RGVDQQDGKNHAGSPGCEESDAGKEKLP) is disordered. Phosphoserine is present on serine 340.

Belongs to the peptidase C14A family. As to quaternary structure, heterotetramer that consists of two anti-parallel arranged heterodimers, each one formed by a p18 subunit and a p12 subunit. Forms a complex named the PIDDosome with PIDD1 and CRADD. Interacts with NOL3 (via CARD domain); inhibits CASP2 activity in a phosphorylation-dependent manner. The mature protease can process its own propeptide, but not that of other caspases. As to expression, expressed at higher levels in the embryonic lung, liver and kidney than in the heart and brain. In adults, higher level expression is seen in the placenta, lung, kidney, and pancreas than in the heart, brain, liver and skeletal muscle.

It catalyses the reaction Strict requirement for an Asp residue at P1, with 316-Asp being essential for proteolytic activity and has a preferred cleavage sequence of Val-Asp-Val-Ala-Asp-|-.. Functionally, is a regulator of the cascade of caspases responsible for apoptosis execution. Might function by either activating some proteins required for cell death or inactivating proteins necessary for cell survival. Associates with PIDD1 and CRADD to form the PIDDosome, a complex that activates CASP2 and triggers apoptosis in response to genotoxic stress. Its function is as follows. Acts as a positive regulator of apoptosis. In terms of biological role, acts as a negative regulator of apoptosis. May function as an endogenous apoptosis inhibitor that antagonizes caspase activation and cell death. This chain is Caspase-2 (CASP2), found in Homo sapiens (Human).